A 529-amino-acid polypeptide reads, in one-letter code: Peptide chain release factor 3 (529 aa).

Positions 11–280 (AKRRTFAIIS…GLVEWAPAPM (270 aa)) constitute a tr-type G domain. Residues 20-27 (SHPDAGKT), 88-92 (DTPGH), and 142-145 (NKLD) each bind GTP.

This sequence belongs to the TRAFAC class translation factor GTPase superfamily. Classic translation factor GTPase family. PrfC subfamily.

Its subcellular location is the cytoplasm. Functionally, increases the formation of ribosomal termination complexes and stimulates activities of RF-1 and RF-2. It binds guanine nucleotides and has strong preference for UGA stop codons. It may interact directly with the ribosome. The stimulation of RF-1 and RF-2 is significantly reduced by GTP and GDP, but not by GMP. The protein is Peptide chain release factor 3 of Yersinia enterocolitica serotype O:8 / biotype 1B (strain NCTC 13174 / 8081).